A 111-amino-acid chain; its full sequence is UPF0342 protein gbs1446 (111 aa).

The protein belongs to the UPF0342 family.

In Streptococcus agalactiae serotype III (strain NEM316), this protein is UPF0342 protein gbs1446.